We begin with the raw amino-acid sequence, 419 residues long: Gamma-glutamyl phosphate reductase (419 aa).

The protein belongs to the gamma-glutamyl phosphate reductase family.

The protein localises to the cytoplasm. It catalyses the reaction L-glutamate 5-semialdehyde + phosphate + NADP(+) = L-glutamyl 5-phosphate + NADPH + H(+). Its pathway is amino-acid biosynthesis; L-proline biosynthesis; L-glutamate 5-semialdehyde from L-glutamate: step 2/2. Functionally, catalyzes the NADPH-dependent reduction of L-glutamate 5-phosphate into L-glutamate 5-semialdehyde and phosphate. The product spontaneously undergoes cyclization to form 1-pyrroline-5-carboxylate. This chain is Gamma-glutamyl phosphate reductase, found in Yersinia pestis.